Here is a 232-residue protein sequence, read N- to C-terminus: Orotidine 5'-phosphate decarboxylase (232 aa).

Substrate is bound by residues D13, K35, 62-71 (DLKFHDIPNT), T121, R182, Q191, G211, and R212. The Proton donor role is filled by K64.

It belongs to the OMP decarboxylase family. Type 1 subfamily. In terms of assembly, homodimer.

It carries out the reaction orotidine 5'-phosphate + H(+) = UMP + CO2. The protein operates within pyrimidine metabolism; UMP biosynthesis via de novo pathway; UMP from orotate: step 2/2. Functionally, catalyzes the decarboxylation of orotidine 5'-monophosphate (OMP) to uridine 5'-monophosphate (UMP). The polypeptide is Orotidine 5'-phosphate decarboxylase (Acinetobacter baumannii (strain ACICU)).